We begin with the raw amino-acid sequence, 1177 residues long: DNA-directed RNA polymerase subunit beta (1177 aa).

Acidic residues predominate over residues 1147 to 1161 (DDTEIEMRDTEDDDD). The disordered stretch occupies residues 1147–1177 (DDTEIEMRDTEDDDDHQSADKLNVEVETTKE). Residues 1162–1177 (HQSADKLNVEVETTKE) show a composition bias toward basic and acidic residues.

Belongs to the RNA polymerase beta chain family. In terms of assembly, the RNAP catalytic core consists of 2 alpha, 1 beta, 1 beta' and 1 omega subunit. When a sigma factor is associated with the core the holoenzyme is formed, which can initiate transcription.

It catalyses the reaction RNA(n) + a ribonucleoside 5'-triphosphate = RNA(n+1) + diphosphate. Its function is as follows. DNA-dependent RNA polymerase catalyzes the transcription of DNA into RNA using the four ribonucleoside triphosphates as substrates. This is DNA-directed RNA polymerase subunit beta from Bacillus anthracis (strain A0248).